A 191-amino-acid polypeptide reads, in one-letter code: Cytochrome c biogenesis ATP-binding export protein CcmA (191 aa).

The ABC transporter domain maps to 6-189 (LVATDIACRR…RVRTLAIRNF (184 aa)). ATP is bound at residue 38 to 45 (GANGIGKS).

Belongs to the ABC transporter superfamily. CcmA exporter (TC 3.A.1.107) family. In terms of assembly, the complex is composed of two ATP-binding proteins (CcmA) and two transmembrane proteins (CcmB).

The protein localises to the cell inner membrane. The enzyme catalyses heme b(in) + ATP + H2O = heme b(out) + ADP + phosphate + H(+). In terms of biological role, part of the ABC transporter complex CcmAB involved in the biogenesis of c-type cytochromes; once thought to export heme, this seems not to be the case, but its exact role is uncertain. Responsible for energy coupling to the transport system. This chain is Cytochrome c biogenesis ATP-binding export protein CcmA, found in Novosphingobium aromaticivorans (strain ATCC 700278 / DSM 12444 / CCUG 56034 / CIP 105152 / NBRC 16084 / F199).